We begin with the raw amino-acid sequence, 274 residues long: Large ribosomal subunit protein uL2cz/uL2cy (274 aa).

Disordered stretches follow at residues 1–20 (MAIH…AVDS) and 223–274 (MNPV…RRSK).

This sequence belongs to the universal ribosomal protein uL2 family. As to quaternary structure, part of the 50S ribosomal subunit.

It is found in the plastid. Its subcellular location is the chloroplast. This chain is Large ribosomal subunit protein uL2cz/uL2cy (rpl2-A), found in Eucalyptus globulus subsp. globulus (Tasmanian blue gum).